Reading from the N-terminus, the 2272-residue chain is Voltage-dependent R-type calcium channel subunit alpha-1E (2272 aa).

The interval 1 to 40 (MARFGEAVVVGRPGSGDGDSDQSRNRQGTPVPASGPAAAY) is disordered. Over 1–90 (MARFGEAVVV…KYAKKLIDWP (90 aa)) the chain is Cytoplasmic. 2 positions are modified to phosphoserine: S15 and S20. One copy of the I repeat lies at 77 to 355 (NIVRKYAKKL…LVLGVLSGEF (279 aa)). The helical transmembrane segment at 91 to 109 (PFEYMILATIIANCIVLAL) threads the bilayer. Topologically, residues 110–128 (EQHLPEDDKTPMSRRLEKT) are extracellular. A helical transmembrane segment spans residues 129-147 (EPYFIGIFCFEAGIKIVAL). The Cytoplasmic segment spans residues 148-159 (GFIFHKGSYLRN). A helical membrane pass occupies residues 160–174 (GWNVMDFIVVLSGIL). Residues 175–186 (ATAGTHFNTHVD) are Extracellular-facing. The chain crosses the membrane as a helical span at residues 187-206 (LRALRAVRVLRPLKLVSGIP). The Cytoplasmic portion of the chain corresponds to 207–224 (SLQIVLKSIMKAMVPLLQ). Residues 225–245 (IGLLLFFAILMFAIIGLEFYS) form a helical membrane-spanning segment. The Extracellular portion of the chain corresponds to 246 to 327 (GKLHRACFMN…NTNDALGATW (82 aa)). A glycan (N-linked (GlcNAc...) asparagine) is linked at N255. Residues 328 to 351 (NWLYFIPLIIIGSFFVLNLVLGVL) form a helical membrane-spanning segment. Topologically, residues 352–477 (SGEFAKERER…ISIRHMVKSQ (126 aa)) are cytoplasmic. Residues 375–392 (QQIERELNGYRAWIDKAE) form a binding to the beta subunit region. Position 427 (D427) interacts with Ca(2+). S428 bears the Phosphoserine mark. 4 residues coordinate Ca(2+): S429, E431, C433, and S438. T441 bears the Phosphothreonine mark. An II repeat occupies 463–707 (ERLLRISIRH…VFLAIAVDNL (245 aa)). Residues 478-497 (VFYWIVLSVVALNTACVAIV) traverse the membrane as a helical segment. Residues 498–510 (HHNQPQWLTHLLY) are Extracellular-facing. The chain crosses the membrane as a helical span at residues 511-530 (YAEFLFLGLFLLEMSLKMYG). The Cytoplasmic segment spans residues 531–539 (MGPRLYFHS). A helical transmembrane segment spans residues 540 to 558 (SFNCFDFGVTVGSIFEVVW). The Extracellular segment spans residues 559 to 568 (AIFRPGTSFG). The chain crosses the membrane as a helical span at residues 569 to 587 (ISVLRALRLLRIFKITKYW). The Cytoplasmic portion of the chain corresponds to 588-606 (ASLRNLVVSLMSSMKSIIS). A helical transmembrane segment spans residues 607–626 (LLFLLFLFIVVFALLGMQLF). Topologically, residues 627–679 (GGRFNFNDGTPSANFDTFPAAIMTVFQILTGEDWNEVMYNGIRSQGGVSSGMW) are extracellular. The helical transmembrane segment at 680–704 (SAIYFIVLTLFGNYTLLNVFLAIAV) threads the bilayer. At 705 to 1150 (DNLANAQELT…TTNPIRRACH (446 aa)) the chain is on the cytoplasmic side. The tract at residues 730–777 (LQKAKEVSPMSAPNMPSIERDRRRRHHMSMWEPRSSHLRERRRRHHMS) is disordered. Phosphoserine occurs at positions 737, 746, 794, 816, and 856. Disordered stretches follow at residues 854-994 (GGSL…VPRG) and 1091-1127 (SNKT…RETG). The segment covering 914–927 (RHRQSQRRSRHRRV) has biased composition (basic residues). The span at 934–946 (SASASRSRSASQE) shows a compositional bias: low complexity. Position 948 is a phosphoserine (S948). 2 stretches are compositionally biased toward basic and acidic residues: residues 956 to 985 (EGEK…DLRR) and 1094 to 1105 (TDGEASPLKEAE). At S1099 the chain carries Phosphoserine. The III repeat unit spans residues 1143–1429 (NPIRRACHYI…IFVALIIITF (287 aa)). A helical membrane pass occupies residues 1151–1167 (YIVNLRYFEMCILLVIA). At 1168 to 1191 (ASSIALAAEDPVLTNSERNKVLRY) the chain is on the extracellular side. The chain crosses the membrane as a helical span at residues 1192-1211 (FDYVFTGVFTFEMVIKMIDQ). Residues 1212 to 1219 (GLILQDGS) lie on the Cytoplasmic side of the membrane. The chain crosses the membrane as a helical span at residues 1220 to 1242 (YFRDLWNILDFVVVVGALVAFAL). Over 1243–1256 (ANALGTNKGRDIKT) the chain is Extracellular. The helical transmembrane segment at 1257-1274 (IKSLRVLRVLRPLKTIKR) threads the bilayer. The Cytoplasmic portion of the chain corresponds to 1275–1293 (LPKLKAVFDCVVTSLKNVF). A helical transmembrane segment spans residues 1294–1313 (NILIVYKLFMFIFAVIAVQL). At 1314–1400 (FKGKFFYCTD…DRGPSRSNRM (87 aa)) the chain is on the extracellular side. The chain crosses the membrane as a helical span at residues 1401-1424 (EMSIFYVVYFVVFPFFFVNIFVAL). Residues 1425 to 1481 (IIITFQEQGDKMMEECSLEKNERACIDFAISAKPLTRYMPQNRHTFQYRVWHFVVSP) are Cytoplasmic-facing. Residues 1466-1729 (NRHTFQYRVW…LFVAVIMDNF (264 aa)) form an IV repeat. Residues 1482-1500 (SFEYTIMAMIALNTVVLMM) form a helical membrane-spanning segment. At 1501 to 1515 (KYYTAPCTYELALKY) the chain is on the extracellular side. A helical transmembrane segment spans residues 1516-1535 (LNIAFTMVFSLECVLKVIAF). Residues 1536-1543 (GFLNYFRD) are Cytoplasmic-facing. Residues 1544 to 1562 (TWNIFDFITVIGSITEIIL) traverse the membrane as a helical segment. At 1563–1573 (TDSKLVNTSGF) the chain is on the extracellular side. N1569 carries N-linked (GlcNAc...) asparagine glycosylation. Residues 1574–1592 (NMSFLKLFRAARLIKLLRQ) form a helical membrane-spanning segment. At 1593 to 1611 (GYTIRILLWTFVQSFKALP) the chain is on the cytoplasmic side. Residues 1612–1631 (YVCLLIAMLFFIYAIIGMQV) form a helical membrane-spanning segment. Over 1632–1700 (FGNIKLDEES…QNESERCGTD (69 aa)) the chain is Extracellular. The N-linked (GlcNAc...) asparagine glycan is linked to N1692. The helical transmembrane segment at 1701-1726 (LAYVYFVSFIFFCSFLMLNLFVAVIM) threads the bilayer. Residues 1727–2272 (DNFEYLTRDS…LSDTEEDDKC (546 aa)) are Cytoplasmic-facing. Residues 1742–1777 (HHLDEFVRVWAEYDRAACGRIHYTEMYEMLTLMSPP) form the EF-hand domain. Residues D1755, R1761, and E1766 each coordinate Ca(2+). Residues 2021–2186 (SAHRLNSDSG…QQGQHPSPQH (166 aa)) form a disordered region. Residues 2025–2045 (LNSDSGHKSDTHRSGGRERGR) are compositionally biased toward basic and acidic residues. Residues S2054 and S2073 each carry the phosphoserine modification. The segment covering 2061 to 2078 (NSEERGTQADWESPERRQ) has biased composition (basic and acidic residues). Low complexity predominate over residues 2097–2112 (SLSESSIPSISDTSTP). A compositionally biased stretch (polar residues) spans 2155-2174 (LASQALESNSACLTESSNSL). Residues 2175–2186 (HPQQGQHPSPQH) are compositionally biased toward low complexity.

It belongs to the calcium channel alpha-1 subunit (TC 1.A.1.11) family. CACNA1E subfamily. As to quaternary structure, interacts with EFHC1. Voltage-dependent calcium channels are multisubunit complexes, consisting of alpha-1, alpha-2, beta and delta subunits in a 1:1:1:1 ratio. The channel activity is directed by the pore-forming and voltage-sensitive alpha-1 subunit. In many cases, this subunit is sufficient to generate voltage-sensitive calcium channel activity. The auxiliary subunits beta and alpha-2/delta linked by a disulfide bridge regulate the channel activity. In terms of tissue distribution, expressed in neuronal tissues, retina, spleen, and pancreatic islet cells.

The protein localises to the membrane. The enzyme catalyses Ca(2+)(in) = Ca(2+)(out). Functionally, voltage-sensitive calcium channels (VSCC) mediate the entry of calcium ions into excitable cells and are also involved in a variety of calcium-dependent processes, including muscle contraction, hormone or neurotransmitter release, gene expression, cell motility, cell division and cell death. The isoform alpha-1E gives rise to R-type calcium currents. R-type calcium channels belong to the 'high-voltage activated' (HVA) group and are blocked by nickel. They are however insensitive to dihydropyridines (DHP). Calcium channels containing alpha-1E subunit could be involved in the modulation of firing patterns of neurons which is important for information processing. In Mus musculus (Mouse), this protein is Voltage-dependent R-type calcium channel subunit alpha-1E (Cacna1e).